A 473-amino-acid polypeptide reads, in one-letter code: Bifunctional protein HldE (473 aa).

The ribokinase stretch occupies residues 1–317; it reads MTHGLPHFTS…LQQALHPRAI (317 aa). 195 to 198 provides a ligand contact to ATP; sequence NLAE. The active site involves aspartate 264. The tract at residues 343–473 is cytidylyltransferase; it reads MTNGCFDILH…SQIIDIIRKN (131 aa).

In the N-terminal section; belongs to the carbohydrate kinase PfkB family. It in the C-terminal section; belongs to the cytidylyltransferase family. In terms of assembly, homodimer.

It carries out the reaction D-glycero-beta-D-manno-heptose 7-phosphate + ATP = D-glycero-beta-D-manno-heptose 1,7-bisphosphate + ADP + H(+). It catalyses the reaction D-glycero-beta-D-manno-heptose 1-phosphate + ATP + H(+) = ADP-D-glycero-beta-D-manno-heptose + diphosphate. The protein operates within nucleotide-sugar biosynthesis; ADP-L-glycero-beta-D-manno-heptose biosynthesis; ADP-L-glycero-beta-D-manno-heptose from D-glycero-beta-D-manno-heptose 7-phosphate: step 1/4. It participates in nucleotide-sugar biosynthesis; ADP-L-glycero-beta-D-manno-heptose biosynthesis; ADP-L-glycero-beta-D-manno-heptose from D-glycero-beta-D-manno-heptose 7-phosphate: step 3/4. Catalyzes the phosphorylation of D-glycero-D-manno-heptose 7-phosphate at the C-1 position to selectively form D-glycero-beta-D-manno-heptose-1,7-bisphosphate. Functionally, catalyzes the ADP transfer from ATP to D-glycero-beta-D-manno-heptose 1-phosphate, yielding ADP-D-glycero-beta-D-manno-heptose. This Nitrosococcus oceani (strain ATCC 19707 / BCRC 17464 / JCM 30415 / NCIMB 11848 / C-107) protein is Bifunctional protein HldE.